A 271-amino-acid chain; its full sequence is Probable WRKY transcription factor 69 (271 aa).

Disordered stretches follow at residues 1–47 (MHRR…NVEK) and 130–166 (PSSSANTKSHHRSSVVLKTAKKEEEYEEEEEELTVTA). Acidic residues predominate over residues 9-18 (ESDDEEDETY). A DNA-binding region (WRKY) is located at residues 64 to 130 (GEVYPPSDSW…YACDHNHPFP (67 aa)).

This sequence belongs to the WRKY group II-e family.

The protein resides in the nucleus. In terms of biological role, transcription factor. Interacts specifically with the W box (5'-(T)TGAC[CT]-3'), a frequently occurring elicitor-responsive cis-acting element. The sequence is that of Probable WRKY transcription factor 69 (WRKY69) from Arabidopsis thaliana (Mouse-ear cress).